The following is a 1331-amino-acid chain: Lysine-specific demethylase 3A-A (1331 aa).

Disordered stretches follow at residues 243–280, 358–381, and 497–532; these read LNDK…PSKD, TPPQ…TQNL, and KVVK…VTYP. Residues 266-280 show a composition bias toward basic and acidic residues; sequence TELKQTRNEEVPSKD. The segment at 683 to 708 adopts a C6-type zinc-finger fold; that stretch reads CDACDTTIFNLHWVCPKCGFGVCVDC. The short motif at 894–898 is the LXXLL motif element; the sequence is LRNLL. Residues 1086 to 1291 enclose the JmjC domain; that stretch reads RREGKLNLAA…HCFWLTQEFR (206 aa). Residues H1130, D1132, and H1259 each coordinate Fe cation.

This sequence belongs to the JHDM2 histone demethylase family. The cofactor is Fe(2+).

Its subcellular location is the cytoplasm. The protein localises to the nucleus. The enzyme catalyses N(6),N(6)-dimethyl-L-lysyl(9)-[histone H3] + 2 2-oxoglutarate + 2 O2 = L-lysyl(9)-[histone H3] + 2 formaldehyde + 2 succinate + 2 CO2. Functionally, histone demethylase that specifically demethylates 'Lys-9' of histone H3, thereby playing a central role in histone code. Preferentially demethylates mono- and dimethylated H3 'Lys-9' residue, with a preference for dimethylated residue, while it has weak or no activity on trimethylated H3 'Lys-9'. Demethylation of Lys residue generates formaldehyde and succinate. The sequence is that of Lysine-specific demethylase 3A-A (kdm3a-a) from Xenopus laevis (African clawed frog).